The sequence spans 77 residues: uncharacterized protein (77 aa).

The protein resides in the plastid. Its subcellular location is the cyanelle. This is an uncharacterized protein from Cyanophora paradoxa.